A 155-amino-acid chain; its full sequence is 6,7-dimethyl-8-ribityllumazine synthase (155 aa).

5-amino-6-(D-ribitylamino)uracil contacts are provided by residues phenylalanine 24, 58–60 (AFE), and 82–84 (AII). 87–88 (ST) is a (2S)-2-hydroxy-3-oxobutyl phosphate binding site. Histidine 90 functions as the Proton donor in the catalytic mechanism. Position 115 (phenylalanine 115) interacts with 5-amino-6-(D-ribitylamino)uracil. Arginine 129 is a (2S)-2-hydroxy-3-oxobutyl phosphate binding site.

This sequence belongs to the DMRL synthase family.

The enzyme catalyses (2S)-2-hydroxy-3-oxobutyl phosphate + 5-amino-6-(D-ribitylamino)uracil = 6,7-dimethyl-8-(1-D-ribityl)lumazine + phosphate + 2 H2O + H(+). Its pathway is cofactor biosynthesis; riboflavin biosynthesis; riboflavin from 2-hydroxy-3-oxobutyl phosphate and 5-amino-6-(D-ribitylamino)uracil: step 1/2. Functionally, catalyzes the formation of 6,7-dimethyl-8-ribityllumazine by condensation of 5-amino-6-(D-ribitylamino)uracil with 3,4-dihydroxy-2-butanone 4-phosphate. This is the penultimate step in the biosynthesis of riboflavin. This is 6,7-dimethyl-8-ribityllumazine synthase from Chlorobium luteolum (strain DSM 273 / BCRC 81028 / 2530) (Pelodictyon luteolum).